The chain runs to 211 residues: 1-deoxy-D-xylulose 5-phosphate reductoisomerase (211 aa).

A Mn(2+)-binding site is contributed by Asp-14. 1-deoxy-D-xylulose 5-phosphate-binding residues include Ser-15, Glu-16, Ser-40, His-63, Ser-76, Asn-81, Lys-82, and Glu-85. Glu-16 is a binding site for Mn(2+). Glu-85 is a Mn(2+) binding site.

Belongs to the DXR family. Requires Mn(2+) as cofactor. It depends on Mg(2+) as a cofactor. As to expression, mostly expressed in flowers and, to a lower extent, in leaves.

It localises to the plastid. The protein localises to the chloroplast stroma. The enzyme catalyses 2-C-methyl-D-erythritol 4-phosphate + NADP(+) = 1-deoxy-D-xylulose 5-phosphate + NADPH + H(+). The protein operates within isoprenoid biosynthesis; isopentenyl diphosphate biosynthesis via DXP pathway; isopentenyl diphosphate from 1-deoxy-D-xylulose 5-phosphate: step 1/6. Its function is as follows. Enzyme of the plastid non-mevalonate pathway for isoprenoid biosynthesis that catalyzes the NADPH-dependent rearrangement and reduction of 1-deoxy-D-xylulose-5-phosphate (DXP) to 2-C-methyl-D-erythritol 4-phosphate (MEP). Required for chloroplast development. In Thymus vulgaris (Thyme), this protein is 1-deoxy-D-xylulose 5-phosphate reductoisomerase.